Here is a 228-residue protein sequence, read N- to C-terminus: Cytidylate kinase (228 aa).

Residue Gly17–Thr25 coordinates ATP.

The protein belongs to the cytidylate kinase family. Type 1 subfamily.

The protein resides in the cytoplasm. It catalyses the reaction CMP + ATP = CDP + ADP. It carries out the reaction dCMP + ATP = dCDP + ADP. The protein is Cytidylate kinase of Burkholderia pseudomallei (strain 1106a).